A 436-amino-acid chain; its full sequence is ABC transporter permease YtrF (436 aa).

An N-terminal signal peptide occupies residues 1–31 (MRFKDQVHFIRRNMKKNRLRVFMTILATTMA). Residue cysteine 32 is the site of N-palmitoyl cysteine attachment. Cysteine 32 is lipidated: S-diacylglycerol cysteine. Residues 115–165 (NMNDELKANMELEKGRVAKSENEIVVGYDFAKRLLTKKESEEYNKKIEEAK) are a coiled coil. The next 3 helical transmembrane spans lie at 293–313 (FKIGLIFVGCIAVIISAIGIF), 350–370 (YIGILGCVIGIIISYGVSYLV), and 396–416 (IPASLVIIAVVICGGVAVISG).

Belongs to the ABC-4 integral membrane protein family. In terms of assembly, the complex is composed of 2 ATP-binding proteins (YtrB and YtrE), 2 transmembrane proteins (YtrC and YtrD) and a solute-binding protein (YtrF).

Its subcellular location is the cell membrane. In terms of biological role, part of the ABC transporter complex YtrBCDEF that plays a role in acetoin utilization during stationary phase and sporulation. In Bacillus subtilis (strain 168), this protein is ABC transporter permease YtrF (ytrF).